A 607-amino-acid polypeptide reads, in one-letter code: Dopamine receptor 3 (607 aa).

Over 1–23 (MLAGQHHVTDIESPLMVVLWRVA) the chain is Extracellular. A helical membrane pass occupies residues 24 to 44 (AGVFLPLVPTMAVFGNVLVIM). At 45-58 (SVFRERSLQTVTNM) the chain is on the cytoplasmic side. A helical transmembrane segment spans residues 59 to 79 (LIVSLAVSDFMVAIGVMSFGV). Topologically, residues 80 to 96 (YYEWNDFKWGLGSFFCH) are extracellular. C95 and C173 are joined by a disulfide. The helical transmembrane segment at 97-117 (VYQALDVACSTASILNLLAIS) threads the bilayer. Residues 118–141 (LDRYIAIGHPISYAQYGARGGRAM) are Cytoplasmic-facing. The helical transmembrane segment at 142–162 (ISITIVWGVSVAVALPLLLGV) threads the bilayer. Residues 163–182 (NPMEENDLQECELANPYFNM) lie on the Extracellular side of the membrane. A helical membrane pass occupies residues 183–203 (ISSIFSFFIPCIAMIILYTII). The Cytoplasmic segment spans residues 204–523 (FRRLRQRERA…TKQMRREHKA (320 aa)). The segment at 402–435 (VPSIQDEKKLSQKSNDLPFSHQNGTHKQKLLPNP) is disordered. The span at 413–424 (QKSNDLPFSHQN) shows a compositional bias: polar residues. Residues 524–544 (TVTLAVVLAVFLFCWLPFFVL) traverse the membrane as a helical segment. Over 545-558 (HLSNSICLIIDENS) the chain is Extracellular. A helical transmembrane segment spans residues 559-579 (ACVGFLPLYLATWLGYLNSSL). The Cytoplasmic segment spans residues 580–607 (NPLIYTVFDQRFRNAFRNILSCGIFKKR).

This sequence belongs to the G-protein coupled receptor 1 family. Expressed in the neurons of the head, ventral cord and tail with weak expression observed in body wall muscles and PVD neurons. In the ventral cord, expressed strongly in GABAergic neurons with weaker expression in cholinergic motor neurons. Expressed in cholinergic SIA neurons and octopaminergic RIC neurons. In males, expressed in the dorsal and ventral spicule protractor and retractor muscles, and the sensory post-cloacal sensilla B (PCB) neuron. Expressed in the head acetylcholine neurons. Expressed in the AVA, AVB, AVD and AVE command interneurons. Expressed in premotor interneurons.

The protein localises to the cell membrane. G-protein coupled receptor which binds to the neurotransmitter dopamine with high affinity leading to the activation of an associated G-protein and downstream signaling pathways. Couples to G-proteins to inhibit adenylate cyclase (AC) activity and cAMP production. Antagonizes the D1-like dopamine receptor dop-1 to negatively regulate the rate of locomotion. Negatively regulates locomotion through the activation of goa-1 subunit proteins which inactivates the unc-77/nca-1 and nca-2 ion-channels in the command interneurons. Inhibits early-stage swimming by modulating the unc-77/nca-1 and nca-2 ion channels of premotor interneurons. In GABAergic, RIC, and SIA neurons, antagonizes the function of dop-1 to play a role in behavioral plasticity and regulate the decision-making process when conflicting alternatives are present. Antagonizes octopamine signaling in response to food by promoting the dopamine-mediated suppression of crh-1/CREB1 transcription factor activation in cholinergic SIA neurons. This is most likely in association with the G(o)-alpha G-protein subunit goa-1. Promotes male mating behavior by antagonizing acetylcholine signaling to control the protrusion of copulatory spicules from the tail of males during hermaphrodite vulval location. Under mitochondria stress, plays a role in bacterial preference, resulting in learned avoidance behavior. This chain is Dopamine receptor 3, found in Caenorhabditis elegans.